The primary structure comprises 223 residues: Probable glutathione S-transferase (223 aa).

The region spanning 2–81 (AEVKLLGFWY…YIDETFEGPS (80 aa)) is the GST N-terminal domain. Residues Ser-12, Lys-39, Val-53, and 65–66 (ES) each bind glutathione. The 127-residue stretch at 86–212 (DPYDRALARF…ELLAFFRARF (127 aa)) folds into the GST C-terminal domain.

This sequence belongs to the GST superfamily. HSP26 family. As to expression, root tip-specific expression.

It carries out the reaction RX + glutathione = an S-substituted glutathione + a halide anion + H(+). The chain is Probable glutathione S-transferase from Nicotiana tabacum (Common tobacco).